The following is a 349-amino-acid chain: MKIGILLSGGVDSAVALYQLKNEGYEIVAYHMKTMKDEFFLNRQVKHKICCSPSDTVDAKLIAKTAGVPLKVVNLHEIFKEKIITYYLQEYTRGRTPNPCYFCNRFIKFGYLMDLMIEDGVDVISSGHYARVVDGKLLKALDKEKDQSYFLASIEKERLKKIVFPNGDKTKDEIRDIAKKAGIHVHSKAESQDLCFIPDGDQKRFFEEQGIKIKSGPIFDKYGKKIGEHTGLINYTIGQRKIGVSAGERVYVTRICADRNALIVGNEKDVQSDKFSVIDFNLLVDIDKNFEATVKVRKNSTEVPCKVSLENHRVIVKTTMPVFAVAPGQAAVFYRGDIVIGAGIIEKIL.

ATP-binding positions include leucine 6–serine 13 and methionine 32. Cysteine 103 acts as the Nucleophile in catalysis. Residues cysteine 103 and cysteine 195 are joined by a disulfide bond. ATP is bound at residue glycine 127. An interaction with tRNA region spans residues lysine 145 to glutamine 147. The active-site Cysteine persulfide intermediate is cysteine 195.

Belongs to the MnmA/TRMU family.

It is found in the cytoplasm. The enzyme catalyses S-sulfanyl-L-cysteinyl-[protein] + uridine(34) in tRNA + AH2 + ATP = 2-thiouridine(34) in tRNA + L-cysteinyl-[protein] + A + AMP + diphosphate + H(+). Functionally, catalyzes the 2-thiolation of uridine at the wobble position (U34) of tRNA, leading to the formation of s(2)U34. This chain is tRNA-specific 2-thiouridylase MnmA, found in Pseudothermotoga lettingae (strain ATCC BAA-301 / DSM 14385 / NBRC 107922 / TMO) (Thermotoga lettingae).